We begin with the raw amino-acid sequence, 169 residues long: Centrin-1 (169 aa).

The interval 1–21 (MHSRKGASSLPRGRGAGKKTE) is essential for homooligomerization. A disordered region spans residues 1 to 25 (MHSRKGASSLPRGRGAGKKTELTEE). EF-hand domains are found at residues 25–60 (EQRQEIKEAFDLFDTDGSGCIDAKELKVAMRALGFE), 61–96 (PKKEEIRKMIADVDKDGTGSVDFQEFLSLMTVKMAE), 98–133 (DPREEILKAFRLFDDDETGKISFKNLKRVSKELGEN), and 134–169 (LTDEELQEMIDEADRDGDGEINEEEFIRIMRKTNLF). 10 residues coordinate Ca(2+): D38, D40, S42, C44, E49, D74, D76, T78, S80, and E85.

The protein belongs to the centrin family. Monomer. Homooligomerizes in a Ca(2+)-dependent manner. Interaction via the C-terminus with other proteins disrupts and/or prevents homooligomerization. Interacts with SFI1.

The protein resides in the cytoplasm. The protein localises to the cytoskeleton. Its subcellular location is the microtubule organizing center. It is found in the centrosome. Functionally, acts as a calcium sensor. Part of the centrosome outer core complex. This chain is Centrin-1, found in Toxoplasma gondii (strain ATCC 50611 / Me49).